Reading from the N-terminus, the 962-residue chain is Probable transport protein MmpL9 (962 aa).

A run of 12 helical transmembrane segments spans residues 25-45, 201-223, 225-247, 256-276, 302-322, 335-355, 383-403, 768-788, 796-816, 820-840, 867-887, and 895-915; these read LAAI…SVAV, LITG…SIAT, LLIL…FLGY, FVVN…AIFL, ANVI…LSFA, AIGM…IIAI, WPGP…LALP, YDIL…MLMI, LVIV…SVLI, FVGL…LLAV, AMAG…FTMA, and RVIG…TLVV.

The protein belongs to the resistance-nodulation-cell division (RND) (TC 2.A.6) family. MmpL subfamily.

The protein localises to the cell membrane. In Mycobacterium tuberculosis (strain ATCC 25618 / H37Rv), this protein is Probable transport protein MmpL9 (mmpL9).